A 212-amino-acid polypeptide reads, in one-letter code: Transmembrane protein 186 (212 aa).

The Mitochondrial matrix segment spans residues 1–78; the sequence is MAAVLRAVAR…YLSRLKVAQT (78 aa). A helical membrane pass occupies residues 79–99; it reads ALTVAALPPGLYCYSQGLMPF. The Mitochondrial intermembrane segment spans residues 100–101; that stretch reads SS. Residues 102-122 form a helical membrane-spanning segment; it reads LCLAGGVAGFALAMLCWMSHF. Over 123–212 the chain is Mitochondrial matrix; sequence FRRLVGILYV…QVFGVLDALK (90 aa).

This sequence belongs to the TMEM186 family. Part of the mitochondrial complex I assembly/MCIA complex that comprises at least the core subunits TMEM126B, NDUFAF1, ECSIT and ACAD9 and complement subunits such as COA1 and TMEM186. Interacts with MT-ND3.

The protein resides in the mitochondrion inner membrane. Functionally, as part of the MCIA complex, required for efficient assembly of the mitochondrial complex I. In Bos taurus (Bovine), this protein is Transmembrane protein 186.